Reading from the N-terminus, the 319-residue chain is Tetrahydromethanopterin S-methyltransferase subunit H (319 aa).

This sequence belongs to the MtrH family. The complex is composed of 8 subunits; MtrA, MtrB, MtrC, MtrD, MtrE, MtrF, MtrG and MtrH.

The enzyme catalyses 5-methyl-5,6,7,8-tetrahydromethanopterin + coenzyme M + 2 Na(+)(in) = 5,6,7,8-tetrahydromethanopterin + methyl-coenzyme M + 2 Na(+)(out). The protein operates within one-carbon metabolism; methanogenesis from CO(2); methyl-coenzyme M from 5,10-methylene-5,6,7,8-tetrahydromethanopterin: step 2/2. Part of a complex that catalyzes the formation of methyl-coenzyme M and tetrahydromethanopterin from coenzyme M and methyl-tetrahydromethanopterin. This is an energy-conserving, sodium-ion translocating step. MtrH catalyzes the transfer of the methyl group from methyl-tetrahydromethanopterin to the corrinoid prosthetic group of MtrA. The protein is Tetrahydromethanopterin S-methyltransferase subunit H of Methanocaldococcus jannaschii (strain ATCC 43067 / DSM 2661 / JAL-1 / JCM 10045 / NBRC 100440) (Methanococcus jannaschii).